The chain runs to 449 residues: CCA-adding enzyme (449 aa).

Ser57 and Arg60 together coordinate ATP. 2 residues coordinate CTP: Ser57 and Arg60. Residues Asp69, Asp71, and Asp124 each contribute to the Mg(2+) site. His147, Lys167, and Tyr176 together coordinate ATP. The CTP site is built by His147, Lys167, and Tyr176.

The protein belongs to the tRNA nucleotidyltransferase/poly(A) polymerase family. Archaeal CCA-adding enzyme subfamily. In terms of assembly, homodimer. It depends on Mg(2+) as a cofactor.

It carries out the reaction a tRNA precursor + 2 CTP + ATP = a tRNA with a 3' CCA end + 3 diphosphate. The enzyme catalyses a tRNA with a 3' CCA end + 2 CTP + ATP = a tRNA with a 3' CCACCA end + 3 diphosphate. In terms of biological role, catalyzes the addition and repair of the essential 3'-terminal CCA sequence in tRNAs without using a nucleic acid template. Adds these three nucleotides in the order of C, C, and A to the tRNA nucleotide-73, using CTP and ATP as substrates and producing inorganic pyrophosphate. tRNA 3'-terminal CCA addition is required both for tRNA processing and repair. Also involved in tRNA surveillance by mediating tandem CCA addition to generate a CCACCA at the 3' terminus of unstable tRNAs. While stable tRNAs receive only 3'-terminal CCA, unstable tRNAs are marked with CCACCA and rapidly degraded. The chain is CCA-adding enzyme from Methanocaldococcus jannaschii (strain ATCC 43067 / DSM 2661 / JAL-1 / JCM 10045 / NBRC 100440) (Methanococcus jannaschii).